A 135-amino-acid chain; its full sequence is Retinol-binding protein 5 (135 aa).

This sequence belongs to the calycin superfamily. Fatty-acid binding protein (FABP) family.

It is found in the cytoplasm. In terms of biological role, intracellular transport of retinol. This chain is Retinol-binding protein 5 (RBP5), found in Pongo abelii (Sumatran orangutan).